Consider the following 217-residue polypeptide: Frizzled-8 (217 aa).

Topologically, residues 1–26 (AGAAELQPELAVAEHVRYESTGPALC) are extracellular. A helical transmembrane segment spans residues 27-47 (TVVFLLVYFFGMASSIWWVIL). At 48-69 (SLTWFLAAGMKWGNEAIAGYAQ) the chain is on the cytoplasmic side. A helical transmembrane segment spans residues 70-90 (YFHLAAWLLPSVKSIAVLALS). Residues 91-113 (SVDGDPVAGICYVGNQSLENLRG) lie on the Extracellular side of the membrane. A glycan (N-linked (GlcNAc...) asparagine) is linked at N105. The chain crosses the membrane as a helical span at residues 114–134 (FVLAPLVVYLFTGSLFLLAGF). The Cytoplasmic segment spans residues 135–160 (VSLFRIRSVIKQGGTKTDKLEKLMIR). A helical transmembrane segment spans residues 161–181 (IGIFTVLYTVPATIVIACYIY). Residues 182–209 (EQHNREAWEQAQNCSCPGDPHRPKPDYA) are Extracellular-facing. N194 is a glycosylation site (N-linked (GlcNAc...) asparagine). The chain crosses the membrane as a helical span at residues 210–217 (VFMLKYFM).

This sequence belongs to the G-protein coupled receptor Fz/Smo family.

Its subcellular location is the membrane. The protein resides in the cell membrane. In terms of biological role, receptor for Wnt proteins. Most of frizzled receptors are coupled to the beta-catenin canonical signaling pathway, which leads to the activation of disheveled proteins, inhibition of GSK-3 kinase, nuclear accumulation of beta-catenin and activation of Wnt target genes. A second signaling pathway involving PKC and calcium fluxes has been seen for some family members, but it is not yet clear if it represents a distinct pathway or if it can be integrated in the canonical pathway, as PKC seems to be required for Wnt-mediated inactivation of GSK-3 kinase. Both pathways seem to involve interactions with G-proteins. May be involved in transduction and intercellular transmission of polarity information during tissue morphogenesis and/or in differentiated tissues. This Gallus gallus (Chicken) protein is Frizzled-8 (FZD8).